The following is a 257-amino-acid chain: Urease accessory protein UreD 3 (257 aa).

The segment at 1–22 (MSVRATARLRAEPDGRDGTALP) is disordered.

It belongs to the UreD family. In terms of assembly, ureD, UreF and UreG form a complex that acts as a GTP-hydrolysis-dependent molecular chaperone, activating the urease apoprotein by helping to assemble the nickel containing metallocenter of UreC. The UreE protein probably delivers the nickel.

It localises to the cytoplasm. Functionally, required for maturation of urease via the functional incorporation of the urease nickel metallocenter. The sequence is that of Urease accessory protein UreD 3 from Streptomyces griseus subsp. griseus (strain JCM 4626 / CBS 651.72 / NBRC 13350 / KCC S-0626 / ISP 5235).